A 213-amino-acid polypeptide reads, in one-letter code: Phosphoheptose isomerase (213 aa).

The 159-residue stretch at 50–208 folds into the SIS domain; the sequence is MAETFEGGGR…IDLVERMLGY (159 aa). A substrate-binding site is contributed by 65–67; it reads NGG. Zn(2+)-binding residues include His-74 and Glu-78. Substrate is bound by residues Glu-78, 109-110, 135-137, Ser-140, and Gln-188; these read ND and STS. Zn(2+) is bound by residues Gln-188 and His-196.

This sequence belongs to the SIS family. GmhA subfamily. Requires Zn(2+) as cofactor.

It localises to the cytoplasm. The catalysed reaction is 2 D-sedoheptulose 7-phosphate = D-glycero-alpha-D-manno-heptose 7-phosphate + D-glycero-beta-D-manno-heptose 7-phosphate. It participates in carbohydrate biosynthesis; D-glycero-D-manno-heptose 7-phosphate biosynthesis; D-glycero-alpha-D-manno-heptose 7-phosphate and D-glycero-beta-D-manno-heptose 7-phosphate from sedoheptulose 7-phosphate: step 1/1. Catalyzes the isomerization of sedoheptulose 7-phosphate in D-glycero-D-manno-heptose 7-phosphate. The polypeptide is Phosphoheptose isomerase (Chlorobium phaeovibrioides (strain DSM 265 / 1930) (Prosthecochloris vibrioformis (strain DSM 265))).